The sequence spans 240 residues: Putative protein FAM10A4 (240 aa).

The segment at 38–94 (MGGTATQKAKSEENTKEEKPDSKVEEDLKADEPSSEESDLEIDKEGVIEPDTDAPQE) is disordered. The segment covering 46-69 (AKSEENTKEEKPDSKVEEDLKADE) has biased composition (basic and acidic residues). The segment covering 85-94 (IEPDTDAPQE) has biased composition (acidic residues). TPR repeat units follow at residues 110–143 (ANDK…NPRL), 145–177 (ILYA…NPDS), and 179–211 (QPYK…DYDE). A disordered region spans residues 220–240 (VQPRAQKIAEHQRKYERKREE). Basic and acidic residues predominate over residues 226–240 (KIAEHQRKYERKREE).

Belongs to the FAM10 family. As to expression, highly expressed in bone marrow and weakly in placenta, pancreas, heart and HeLa cell line.

The protein localises to the cytoplasm. The protein is Putative protein FAM10A4 (ST13P4) of Homo sapiens (Human).